Here is a 757-residue protein sequence, read N- to C-terminus: Endonuclease MutS2 (757 aa).

321-328 (GPNMGGKT) contacts ATP. The region spanning 681–756 (IDIRGMTVEE…GTGVTVVEVK (76 aa)) is the Smr domain.

The protein belongs to the DNA mismatch repair MutS family. MutS2 subfamily. Homodimer. Binds to stalled ribosomes, contacting rRNA.

Functionally, endonuclease that is involved in the suppression of homologous recombination and thus may have a key role in the control of bacterial genetic diversity. Acts as a ribosome collision sensor, splitting the ribosome into its 2 subunits. Detects stalled/collided 70S ribosomes which it binds and splits by an ATP-hydrolysis driven conformational change. Acts upstream of the ribosome quality control system (RQC), a ribosome-associated complex that mediates the extraction of incompletely synthesized nascent chains from stalled ribosomes and their subsequent degradation. Probably generates substrates for RQC. The protein is Endonuclease MutS2 of Thermotoga sp. (strain RQ2).